The primary structure comprises 389 residues: Nicotinate phosphoribosyltransferase (389 aa).

Histidine 211 bears the Phosphohistidine; by autocatalysis mark.

The protein belongs to the NAPRTase family. Post-translationally, transiently phosphorylated on a His residue during the reaction cycle. Phosphorylation strongly increases the affinity for substrates and increases the rate of nicotinate D-ribonucleotide production. Dephosphorylation regenerates the low-affinity form of the enzyme, leading to product release.

It catalyses the reaction nicotinate + 5-phospho-alpha-D-ribose 1-diphosphate + ATP + H2O = nicotinate beta-D-ribonucleotide + ADP + phosphate + diphosphate. Its pathway is cofactor biosynthesis; NAD(+) biosynthesis; nicotinate D-ribonucleotide from nicotinate: step 1/1. Its function is as follows. Catalyzes the synthesis of beta-nicotinate D-ribonucleotide from nicotinate and 5-phospho-D-ribose 1-phosphate at the expense of ATP. This Desulforapulum autotrophicum (strain ATCC 43914 / DSM 3382 / VKM B-1955 / HRM2) (Desulfobacterium autotrophicum) protein is Nicotinate phosphoribosyltransferase.